Consider the following 488-residue polypeptide: Protein nucleotidyltransferase YdiU (488 aa).

The ATP site is built by G91, G93, R94, K114, D126, G127, R177, and R184. Catalysis depends on D253, which acts as the Proton acceptor. 2 residues coordinate Mg(2+): N254 and D263. D263 contributes to the ATP binding site.

Belongs to the SELO family. Mg(2+) serves as cofactor. Mn(2+) is required as a cofactor.

The enzyme catalyses L-seryl-[protein] + ATP = 3-O-(5'-adenylyl)-L-seryl-[protein] + diphosphate. It catalyses the reaction L-threonyl-[protein] + ATP = 3-O-(5'-adenylyl)-L-threonyl-[protein] + diphosphate. It carries out the reaction L-tyrosyl-[protein] + ATP = O-(5'-adenylyl)-L-tyrosyl-[protein] + diphosphate. The catalysed reaction is L-histidyl-[protein] + UTP = N(tele)-(5'-uridylyl)-L-histidyl-[protein] + diphosphate. The enzyme catalyses L-seryl-[protein] + UTP = O-(5'-uridylyl)-L-seryl-[protein] + diphosphate. It catalyses the reaction L-tyrosyl-[protein] + UTP = O-(5'-uridylyl)-L-tyrosyl-[protein] + diphosphate. In terms of biological role, nucleotidyltransferase involved in the post-translational modification of proteins. It can catalyze the addition of adenosine monophosphate (AMP) or uridine monophosphate (UMP) to a protein, resulting in modifications known as AMPylation and UMPylation. This Bacillus cereus (strain ZK / E33L) protein is Protein nucleotidyltransferase YdiU.